Reading from the N-terminus, the 333-residue chain is Electron transfer flavoprotein subunit alpha, mitochondrial (333 aa).

The transit peptide at 1–19 (MFRAAAPGQLRRAASLLRF) directs the protein to the mitochondrion. The tract at residues 20–204 (QSTLVIAEHA…GISEWLDQKL (185 aa)) is domain I. K59 carries the post-translational modification N6-acetyllysine; alternate. K59 carries the post-translational modification N6-succinyllysine; alternate. K62 is modified (N6-acetyllysine). Position 69 is an N6-acetyllysine; alternate (K69). K69 carries the N6-succinyllysine; alternate modification. N6-acetyllysine is present on K75. At K85 the chain carries N6-acetyllysine; alternate. K85 carries the N6-succinyllysine; alternate modification. T93 carries the post-translational modification Phosphothreonine. N6-acetyllysine is present on residues K101 and K139. The residue at position 140 (S140) is a Phosphoserine. K158 bears the N6-acetyllysine; alternate mark. An N6-succinyllysine; alternate modification is found at K158. K164 is modified (N6-acetyllysine). At K187 the chain carries N6-succinyllysine. The residue at position 203 (K203) is an N6-acetyllysine; alternate. Residue K203 is modified to N6-succinyllysine; alternate. The interval 205-333 (TKSDRPELTG…PEMTEILKKK (129 aa)) is domain II. K216 carries the N6-succinyllysine modification. R223 is a binding site for FAD. N6-acetyllysine; alternate occurs at positions 226 and 232. An N6-succinyllysine; alternate mark is found at K226 and K232. FAD is bound by residues S248, 263–266 (VGQT), 281–286 (SGAIQH), and N300. N6-succinyllysine is present on K301. 318 to 319 (DL) contacts FAD.

The protein belongs to the ETF alpha-subunit/FixB family. Heterodimer composed of ETFA and ETFB. Identified in a complex that contains ETFA, ETFB and ETFRF1. Interaction with ETFRF1 promotes dissociation of the bound FAD and loss of electron transfer activity. Interacts with TASOR. The cofactor is FAD.

It localises to the mitochondrion matrix. Functionally, heterodimeric electron transfer flavoprotein that accepts electrons from several mitochondrial dehydrogenases, including acyl-CoA dehydrogenases, glutaryl-CoA and sarcosine dehydrogenase. It transfers the electrons to the main mitochondrial respiratory chain via ETF-ubiquinone oxidoreductase (ETF dehydrogenase). Required for normal mitochondrial fatty acid oxidation and normal amino acid metabolism. This chain is Electron transfer flavoprotein subunit alpha, mitochondrial (Etfa), found in Rattus norvegicus (Rat).